The primary structure comprises 659 residues: 3-hydroxypropionyl-coenzyme A synthetase (659 aa).

Aspartate 525 is an active-site residue. The residue at position 616 (lysine 616) is an N6-acetyllysine.

Belongs to the ATP-dependent AMP-binding enzyme family.

The enzyme catalyses 3-hydroxypropanoate + ATP + CoA = 3-hydroxypropanoyl-CoA + AMP + diphosphate. Its function is as follows. Plays a role in the autotrophic CO(2) fixation pathway. Activates 3-hydroxypropionate to its CoA ester. Can also activate propionate, and to a lesser extent acrylate, acetate and butyrate. The polypeptide is 3-hydroxypropionyl-coenzyme A synthetase (Sulfurisphaera tokodaii (strain DSM 16993 / JCM 10545 / NBRC 100140 / 7) (Sulfolobus tokodaii)).